Here is a 187-residue protein sequence, read N- to C-terminus: Putative adenylate kinase (187 aa).

Residues G10, G12, K13, T14, and V15 each contribute to the ATP site. The interval 30–53 is NMP; sequence SLSQFVIENKLYTEYDELRQSYII. The LID stretch occupies residues 103 to 113; the sequence is GRGWADIKVAE. R104 contributes to the ATP binding site.

This sequence belongs to the adenylate kinase family. AK6 subfamily. As to quaternary structure, interacts with uS11. Not a structural component of 40S pre-ribosomes, but transiently interacts with them by binding to uS11.

The catalysed reaction is AMP + ATP = 2 ADP. The enzyme catalyses ATP + H2O = ADP + phosphate + H(+). In terms of biological role, broad-specificity nucleoside monophosphate (NMP) kinase that catalyzes the reversible transfer of the terminal phosphate group between nucleoside triphosphates and monophosphates. Also has ATPase activity. Involved in the late maturation steps of the 30S ribosomal particles, specifically 16S rRNA maturation. While NMP activity is not required for ribosome maturation, ATPase activity is. Associates transiently with small ribosomal subunit protein uS11. ATP hydrolysis breaks the interaction with uS11. May temporarily remove uS11 from the ribosome to enable a conformational change of the ribosomal RNA that is needed for the final maturation step of the small ribosomal subunit. This chain is Putative adenylate kinase, found in Saccharolobus islandicus (strain M.16.4 / Kamchatka #3) (Sulfolobus islandicus).